The sequence spans 100 residues: Aspartyl/glutamyl-tRNA(Asn/Gln) amidotransferase subunit C (100 aa).

It belongs to the GatC family. Heterotrimer of A, B and C subunits.

The enzyme catalyses L-glutamyl-tRNA(Gln) + L-glutamine + ATP + H2O = L-glutaminyl-tRNA(Gln) + L-glutamate + ADP + phosphate + H(+). It carries out the reaction L-aspartyl-tRNA(Asn) + L-glutamine + ATP + H2O = L-asparaginyl-tRNA(Asn) + L-glutamate + ADP + phosphate + 2 H(+). Functionally, allows the formation of correctly charged Asn-tRNA(Asn) or Gln-tRNA(Gln) through the transamidation of misacylated Asp-tRNA(Asn) or Glu-tRNA(Gln) in organisms which lack either or both of asparaginyl-tRNA or glutaminyl-tRNA synthetases. The reaction takes place in the presence of glutamine and ATP through an activated phospho-Asp-tRNA(Asn) or phospho-Glu-tRNA(Gln). The protein is Aspartyl/glutamyl-tRNA(Asn/Gln) amidotransferase subunit C of Streptococcus equi subsp. equi (strain 4047).